The sequence spans 372 residues: NAD(P)H-quinone oxidoreductase subunit 1 (372 aa).

The next 8 membrane-spanning stretches (helical) occupy residues 27 to 47, 97 to 117, 128 to 148, 176 to 196, 204 to 224, 270 to 290, 308 to 328, and 351 to 371; these read LLWL…GVLV, LLFT…WLII, VGIG…GLLM, LALA…IDIV, FLSW…ICAL, LLVS…ELIA, SLGI…AILL, and ISLV…FAFG.

It belongs to the complex I subunit 1 family. NDH-1 is composed of at least 11 different subunits.

The protein resides in the cellular thylakoid membrane. It carries out the reaction a plastoquinone + NADH + (n+1) H(+)(in) = a plastoquinol + NAD(+) + n H(+)(out). The catalysed reaction is a plastoquinone + NADPH + (n+1) H(+)(in) = a plastoquinol + NADP(+) + n H(+)(out). Its function is as follows. NDH-1 shuttles electrons from an unknown electron donor, via FMN and iron-sulfur (Fe-S) centers, to quinones in the respiratory and/or the photosynthetic chain. The immediate electron acceptor for the enzyme in this species is believed to be plastoquinone. Couples the redox reaction to proton translocation, and thus conserves the redox energy in a proton gradient. This is NAD(P)H-quinone oxidoreductase subunit 1 from Prochlorococcus marinus (strain SARG / CCMP1375 / SS120).